A 791-amino-acid chain; its full sequence is DNA repair and recombination protein RAD54-like (791 aa).

The segment covering 1–20 (MRRSLAPSQRIGQSTASRNA) has biased composition (polar residues). Residues 1–53 (MRRSLAPSQRIGQSTASRNAFTPPLLQKKNKRACQKDLRLDTDADEDKERKRF) are disordered. The required for chromatin remodeling, strand pairing activities and coupling of ATPase activity stretch occupies residues 2 to 9 (RRSLAPSQ). Threonine 22 is subject to Phosphothreonine. The segment covering 34-53 (CQKDLRLDTDADEDKERKRF) has biased composition (basic and acidic residues). Residues 175 to 349 (EGKKGDFNGC…FSLVNFVNPE (175 aa)) enclose the Helicase ATP-binding domain. 188–195 (DEMGLGKT) lines the ATP pocket. Residues 300–303 (DEGH) carry the DEGH box motif. The region spanning 506–663 (LLDFMLAAIR…NNESSEKHFT (158 aa)) is the Helicase C-terminal domain. Residues 747 to 791 (KEVVESPESAAAEAESVEEESQPTQRKRPSPPLSDDSADEDFIGF) are disordered. Residues 782–791 (DSADEDFIGF) show a composition bias toward acidic residues.

This sequence belongs to the SNF2/RAD54 helicase family. As to quaternary structure, interacts (via N-terminus) with spn-A/Rad51.

It localises to the nucleus. In terms of biological role, involved in mitotic DNA repair and meiotic recombination. Functions in the recombinational DNA repair pathway. Essential for interhomolog gene conversion (GC), but may have a less important role in intersister GC than spn-A/Rad51. In the presence of DNA, spn-A/Rad51 enhances the ATPase activity of okr/Rad54. The sequence is that of DNA repair and recombination protein RAD54-like from Drosophila ananassae (Fruit fly).